The chain runs to 382 residues: Aminotransferase FGSG_00049 (382 aa).

R80 is a binding site for pyridoxal 5'-phosphate. K181 carries the N6-(pyridoxal phosphate)lysine modification. A pyridoxal 5'-phosphate-binding site is contributed by E217.

It belongs to the class-IV pyridoxal-phosphate-dependent aminotransferase family. Pyridoxal 5'-phosphate is required as a cofactor.

It functions in the pathway mycotoxin biosynthesis. Aminotransferase; part of the gene cluster that mediates the biosynthesis of gramillins A and B, bicyclic lipopeptides that induce cell death in maize leaves but not in wheat leaves. The nonribosomal peptide synthetase GRA1 incorporates respectively a glutamic adic (Glu), a leucine (Leu), a serine (Ser), a hydroxyglutamine (HOGln), a 2-amino decanoic acid, and 2 cysteins (CysB and CysA). The biosynthesis of 2-amino decanoic acid incorporated in gramillins could be initiated by a fatty acid synthase composed of the alpha and beta subunits FGSG_00036 and FGSG_11656. The cytochrome P450 monooxygenase FGSG_15680 could hydroxylate the fatty acid chain. Subsequent oxidation to the ketone by the oxidoreductase FGSG_00048 and transamination by aminotransferase FGSG_00049 could form 2-amino-decanoic acid. On the other hand, FGSG_15680 could also be responsible for the HO-modified glutamine at the gamma-position. Whether hydroxylation occurs on the fully assembled product or on the Gln residue prior to assembly into the gramillins requires further proof. The thioredoxin FGSG_00043 could also be required for the disulfide-bond formation between CysA and CysB. The specific involvement of the remaining proteins from the cluster is more difficult to discern, but could have broader regulatory (FGSG_00040 and FGSG_11657) or enzymatic functions (FGSG_00044 and FGSG_00045). The final C-domain of GRA1 does not possess the expected sequence of a termination CT domain, often implicated in macrocyclization and release of a cyclopeptidein fungal NRPs; and the thioesterase FGSG_00047 may act in concert with the terminal C-domain of GRA1 to catalyze the formation of the macrocyclic anhydride and release of the products. This is Aminotransferase FGSG_00049 from Gibberella zeae (strain ATCC MYA-4620 / CBS 123657 / FGSC 9075 / NRRL 31084 / PH-1) (Wheat head blight fungus).